A 138-amino-acid chain; its full sequence is uncharacterized protein (138 aa).

3 consecutive transmembrane segments (helical) span residues 17 to 37 (IVVS…TIYF), 43 to 63 (FTVV…LLVC), and 117 to 137 (FWWM…LVSL).

It localises to the cell membrane. This is an uncharacterized protein from Mycoplasma genitalium (strain ATCC 33530 / DSM 19775 / NCTC 10195 / G37) (Mycoplasmoides genitalium).